The sequence spans 318 residues: Ribonuclease Z (318 aa).

Residues His-63, His-65, Asp-67, His-68, His-142, Asp-210, and His-268 each coordinate Zn(2+). The active-site Proton acceptor is the Asp-67.

Belongs to the RNase Z family. As to quaternary structure, homodimer. It depends on Zn(2+) as a cofactor.

It catalyses the reaction Endonucleolytic cleavage of RNA, removing extra 3' nucleotides from tRNA precursor, generating 3' termini of tRNAs. A 3'-hydroxy group is left at the tRNA terminus and a 5'-phosphoryl group is left at the trailer molecule.. Functionally, zinc phosphodiesterase, which displays some tRNA 3'-processing endonuclease activity. Probably involved in tRNA maturation, by removing a 3'-trailer from precursor tRNA. This Thermobifida fusca (strain YX) protein is Ribonuclease Z.